The sequence spans 476 residues: GTPase Der (476 aa).

EngA-type G domains lie at 3 to 167 and 205 to 380; these read FTVA…GEDM and LRVA…KTWN. GTP contacts are provided by residues 9–16, 56–60, 119–122, 211–218, 258–262, and 323–326; these read GRPNVGKS, DTAGL, NKSE, GRPNAGKS, DTAGM, and NKWD. A KH-like domain is found at 381–465; sequence RRISTAKLNR…PIRVHYRGSD (85 aa).

Belongs to the TRAFAC class TrmE-Era-EngA-EngB-Septin-like GTPase superfamily. EngA (Der) GTPase family. Associates with the 50S ribosomal subunit.

Its function is as follows. GTPase that plays an essential role in the late steps of ribosome biogenesis. This chain is GTPase Der, found in Agrobacterium fabrum (strain C58 / ATCC 33970) (Agrobacterium tumefaciens (strain C58)).